The primary structure comprises 802 residues: MPQSSPSTAATASDMDKNSGSNSSSASSGSSKGQQPPRSASAGPAGESKPKSDGKNSNGSKRYNRKREPSYPKNENFSNQSRRSNSQKSKTFNKTPPQRGGGSSKPFSSSSNGGRRDEVAEAQRAEFSPAQFSGPKKINLNHLLNFTFEPRGQAGHFEGSGHGSWGKRNKWGHKPFNKELFLQANCQFVVSEDQDYTANFADPDTLVNWDFVEQVRICSHEVPSCPICLYPPTAAKITRCGHIFCWACILHYLSLSERTWSKCPICYSSVHKKDLKSVVATESRQYVVGDTITMQLMKREKGVLVALPKSKWMNVDHPISLGDEQHSQYSKLLLASKEQVLHRVVLEEKVALEQQLAEEKHTPESCFIEAALQEVKIREEALSGVAGGRAEVTGVVTALEQLVLMAPLAKESAFQPRKGVLEYLSAFDEEAAQVCSLDPPGPLALPLVEEEEAVSEPEACEDLIADDSLGEGTVCAELSQEEPIAKPGFTQLSSSPCYYFYQAEDGQHMFLHPVNVRCLVREYGSLEQSPEKISATVVEIAGYSMSEDVRQRHRYLSHLPLTCEFSICELALQPPVVSKETLEMFSDDIEKRKRQRQKKAREERRRERRIELEENKRQGRYPEVHIPLENLQQFPAFNSYTCSSDSALGPTSTEGHGALSLSPLSRSPGSHADFLLTPLSPTASQGSPSFCVGSLEEDSPFLSFAQMLRVGKAKADGWPKAAPKKDDNSLAPPAPVDSDGESDNSDRVPVPSFQNSFSQAIEAAFMKLDTPATSDPLSDRGGRKRKRQKQKLLFSTSVVHTK.

Low complexity-rich tracts occupy residues 1-31, 78-90, and 104-113; these read MPQS…SGSS, SNQS…QKSK, and SKPFSSSSNG. Residues 1–134 form a disordered region; the sequence is MPQSSPSTAA…AEFSPAQFSG (134 aa). The residue at position 5 (S5) is a Phosphoserine. S110 bears the Phosphoserine mark. The segment covering 114–124 has biased composition (basic and acidic residues); sequence GRRDEVAEAQR. At S128 the chain carries Phosphoserine. An RING-type zinc finger spans residues 225 to 267; sequence CPICLYPPTAAKITRCGHIFCWACILHYLSLSERTWSKCPICY. The span at 645 to 654 shows a compositional bias: polar residues; it reads DSALGPTSTE. Disordered regions lie at residues 645–664, 716–753, and 767–802; these read DSAL…LSPL, DGWP…VPSF, and KLDT…VHTK. Basic and acidic residues predominate over residues 716–728; it reads DGWPKAAPKKDDN. The span at 793–802 shows a compositional bias: polar residues; it reads LFSTSVVHTK.

The protein belongs to the RNF10 family. In terms of assembly, interacts with MEOX2.

The protein resides in the cytoplasm. Its subcellular location is the nucleus. The enzyme catalyses S-ubiquitinyl-[E2 ubiquitin-conjugating enzyme]-L-cysteine + [acceptor protein]-L-lysine = [E2 ubiquitin-conjugating enzyme]-L-cysteine + N(6)-ubiquitinyl-[acceptor protein]-L-lysine.. The protein operates within protein modification; protein ubiquitination. E3 ubiquitin-protein ligase that catalyzes monoubiquitination of 40S ribosomal proteins RPS2/us5 and RPS3/us3 in response to ribosome stalling. Part of a ribosome quality control that takes place when ribosomes have stalled during translation initiation (iRQC): RNF10 acts by mediating monoubiquitination of RPS2/us5 and RPS3/us3, promoting their degradation by the proteasome. Also promotes ubiquitination of 40S ribosomal proteins in response to ribosome stalling during translation elongation. The action of RNF10 in iRQC is counteracted by USP10. May also act as a transcriptional factor involved in the regulation of MAG (Myelin-associated glycoprotein) expression. Acts as a regulator of Schwann cell differentiation and myelination. In Rattus norvegicus (Rat), this protein is E3 ubiquitin-protein ligase RNF10.